A 306-amino-acid chain; its full sequence is Curved DNA-binding protein (306 aa).

A J domain is found at 5–69 (DYYAIMGVKP…QRRAEYDQLW (65 aa)).

Its subcellular location is the cytoplasm. The protein resides in the nucleoid. Its function is as follows. DNA-binding protein that preferentially recognizes a curved DNA sequence. It is probably a functional analog of DnaJ; displays overlapping activities with DnaJ, but functions under different conditions, probably acting as a molecular chaperone in an adaptive response to environmental stresses other than heat shock. Lacks autonomous chaperone activity; binds native substrates and targets them for recognition by DnaK. Its activity is inhibited by the binding of CbpM. This Salmonella arizonae (strain ATCC BAA-731 / CDC346-86 / RSK2980) protein is Curved DNA-binding protein.